The sequence spans 698 residues: Epithelial sodium channel subunit alpha (698 aa).

A disordered region spans residues 1 to 70; it reads MLDHTRAPEL…SAPRQPTEEE (70 aa). Over 1 to 110 the chain is Cytoplasmic; sequence MLDHTRAPEL…CSKHNRMKTA (110 aa). Residues 111–131 form a helical membrane-spanning segment; the sequence is FWAVLWLCTFGMMYWQFALLF. Topologically, residues 132–589 are extracellular; the sequence is EEYLSYPVSL…SQWSLWFGSS (458 aa). Cystine bridges form between Cys-158–Cys-332, Cys-256–Cys-263, and Cys-309–Cys-316. Residue Asn-190 is glycosylated (N-linked (GlcNAc...) asparagine). Positions 200-270 are gating release of inhibition by proteolysis (GRIP); protease-sensitive region that is responsible for the proteolytic activation of the channel; it reads RRRSSRDLLG…SDCFYQTYSS (71 aa). Residues 213-243 are disordered; sequence HPLQRLRTPPPPYSGRTARSGSSSVRDNNPQ. A compositionally biased stretch (polar residues) spans 229-243; it reads TARSGSSSVRDNNPQ. N-linked (GlcNAc...) asparagine glycosylation is present at Asn-259. 3 N-linked (GlcNAc...) asparagine glycosylation sites follow: Asn-320, Asn-339, and Asn-424. Cystine bridges form between Cys-421-Cys-506, Cys-443-Cys-483, Cys-443-Cys-502, Cys-447-Cys-498, Cys-456-Cys-483, Cys-456-Cys-506, and Cys-458-Cys-472. An N-linked (GlcNAc...) asparagine glycan is attached at Asn-538. Residues 590–610 form a helical membrane-spanning segment; that stretch reads VLSVVEMAELIFDLLVITLLM. At 611-698 the chain is on the cytoplasmic side; that stretch reads LLRRFRSRYW…DCSACALAAL (88 aa). The disordered stretch occupies residues 637–663; it reads ASSFPSRFCPHPTSPPPSLPQQGMTPP. A PY motif; recruits WW domain-containing proteins and is thereby required for ubiquitination and inhibition of the channel by NEDD4 and NEDD4L motif is present at residues 669–673; sequence PPPAY.

Belongs to the amiloride-sensitive sodium channel (TC 1.A.6) family. SCNN1A subfamily. As to quaternary structure, heterotrimer; containing an alpha/SCNN1A, a beta/SCNN1B and a gamma/SCNN1G subunit. Interacts with WWP1 (via WW domains). Interacts with WWP2 (via WW domains); inhibits the channel. Interacts with BPIFA1; the interaction is indirect via SCNN1B and inhibits the proteolytic processing of SCNN1A and SCNN1G and the activation of ENaC. Interacts with the full-length immature form of PCSK9 (pro-PCSK9). In terms of processing, ubiquitinated. Can be ubiquitinated at multiple sites and undergo monoubiquitination and polyubiquitination. Ubiquitination by NEDD4 or NEDD4L inhibits the ENaC channel through endocytosis, intracellular retention and degradation of its individual subunits. N-glycosylated. Post-translationally, ENaC is activated through the proteolytic maturation of its subunits. Furin cleaves the SCNN1A subunit, which results in a stepwise increase in the open probability of the channel due to the release of an inhibitory tract. BPIFA1, which is recruited by the SCNN1B subunit, prevents the proteolytic activation of ENaC. Detected in kidney, lung and testis (at protein level). In the testis, detected within the seminiferous tubules but not in the interstitial cells (at protein level).

The protein resides in the apical cell membrane. The protein localises to the cell projection. It localises to the cilium. It is found in the cytoplasmic granule. Its subcellular location is the cytoplasm. The protein resides in the cytoplasmic vesicle. The protein localises to the secretory vesicle. It localises to the acrosome. It is found in the flagellum. The catalysed reaction is Na(+)(in) = Na(+)(out). With respect to regulation, originally identified and characterized by its inhibition by the diuretic drug amiloride. In terms of biological role, this is one of the three pore-forming subunits of the heterotrimeric epithelial sodium channel (ENaC), a critical regulator of sodium balance and fluid homeostasis. ENaC operates in epithelial tissues, where it mediates the electrodiffusion of sodium ions from extracellular fluid through the apical membrane of cells, with water following osmotically. It plays a key role in maintaining sodium homeostasis through electrogenic sodium reabsorption in the kidneys. Additionally, ENaC is essential for airway surface liquid homeostasis, which is crucial for proper mucus clearance. The protein is Epithelial sodium channel subunit alpha of Rattus norvegicus (Rat).